We begin with the raw amino-acid sequence, 209 residues long: Thiamine-phosphate synthase (209 aa).

Residues 39–43 (QLREK) and asparagine 71 each bind 4-amino-2-methyl-5-(diphosphooxymethyl)pyrimidine. Residues aspartate 72 and aspartate 91 each coordinate Mg(2+). Residue serine 110 participates in 4-amino-2-methyl-5-(diphosphooxymethyl)pyrimidine binding. Position 136–138 (136–138 (TGT)) interacts with 2-[(2R,5Z)-2-carboxy-4-methylthiazol-5(2H)-ylidene]ethyl phosphate. Lysine 139 contributes to the 4-amino-2-methyl-5-(diphosphooxymethyl)pyrimidine binding site. 2-[(2R,5Z)-2-carboxy-4-methylthiazol-5(2H)-ylidene]ethyl phosphate contacts are provided by residues glycine 166 and 186–187 (VS).

The protein belongs to the thiamine-phosphate synthase family. Mg(2+) serves as cofactor.

The enzyme catalyses 2-[(2R,5Z)-2-carboxy-4-methylthiazol-5(2H)-ylidene]ethyl phosphate + 4-amino-2-methyl-5-(diphosphooxymethyl)pyrimidine + 2 H(+) = thiamine phosphate + CO2 + diphosphate. It catalyses the reaction 2-(2-carboxy-4-methylthiazol-5-yl)ethyl phosphate + 4-amino-2-methyl-5-(diphosphooxymethyl)pyrimidine + 2 H(+) = thiamine phosphate + CO2 + diphosphate. The catalysed reaction is 4-methyl-5-(2-phosphooxyethyl)-thiazole + 4-amino-2-methyl-5-(diphosphooxymethyl)pyrimidine + H(+) = thiamine phosphate + diphosphate. It participates in cofactor biosynthesis; thiamine diphosphate biosynthesis; thiamine phosphate from 4-amino-2-methyl-5-diphosphomethylpyrimidine and 4-methyl-5-(2-phosphoethyl)-thiazole: step 1/1. Its function is as follows. Condenses 4-methyl-5-(beta-hydroxyethyl)thiazole monophosphate (THZ-P) and 2-methyl-4-amino-5-hydroxymethyl pyrimidine pyrophosphate (HMP-PP) to form thiamine monophosphate (TMP). The protein is Thiamine-phosphate synthase of Clostridium beijerinckii (strain ATCC 51743 / NCIMB 8052) (Clostridium acetobutylicum).